A 380-amino-acid chain; its full sequence is 8-amino-7-oxononanoate synthase (380 aa).

Arg-26 serves as a coordination point for substrate. 104–105 is a pyridoxal 5'-phosphate binding site; it reads GY. A substrate-binding site is contributed by His-129. Pyridoxal 5'-phosphate contacts are provided by residues Ser-175, 200 to 203, and 232 to 235; these read DEAH and TLSK. Lys-235 is modified (N6-(pyridoxal phosphate)lysine). Position 345 (Thr-345) interacts with substrate.

The protein belongs to the class-II pyridoxal-phosphate-dependent aminotransferase family. BioF subfamily. As to quaternary structure, homodimer. It depends on pyridoxal 5'-phosphate as a cofactor.

The enzyme catalyses 6-carboxyhexanoyl-[ACP] + L-alanine + H(+) = (8S)-8-amino-7-oxononanoate + holo-[ACP] + CO2. The protein operates within cofactor biosynthesis; biotin biosynthesis. Catalyzes the decarboxylative condensation of pimeloyl-[acyl-carrier protein] and L-alanine to produce 8-amino-7-oxononanoate (AON), [acyl-carrier protein], and carbon dioxide. In Mycolicibacterium vanbaalenii (strain DSM 7251 / JCM 13017 / BCRC 16820 / KCTC 9966 / NRRL B-24157 / PYR-1) (Mycobacterium vanbaalenii), this protein is 8-amino-7-oxononanoate synthase.